Consider the following 62-residue polypeptide: Small ribosomal subunit protein eS27 (62 aa).

Residues cysteine 17, cysteine 20, cysteine 36, and cysteine 39 each coordinate Zn(2+). A C4-type zinc finger spans residues 17–39 (CPDCENEQTIFDRACTPVDCIVC).

The protein belongs to the eukaryotic ribosomal protein eS27 family. In terms of assembly, part of the 30S ribosomal subunit. Zn(2+) is required as a cofactor.

The chain is Small ribosomal subunit protein eS27 from Methanospirillum hungatei JF-1 (strain ATCC 27890 / DSM 864 / NBRC 100397 / JF-1).